Here is a 293-residue protein sequence, read N- to C-terminus: Probable 2-(5''-triphosphoribosyl)-3'-dephosphocoenzyme-A synthase (293 aa).

This sequence belongs to the CitG/MdcB family.

It carries out the reaction 3'-dephospho-CoA + ATP = 2'-(5''-triphospho-alpha-D-ribosyl)-3'-dephospho-CoA + adenine. In terms of biological role, involved in the formation of 2-(5''-phosphoribosyl)-3'-dephosphocoenzyme-A, the prosthetic group of the acyl-carrier protein of the malonate decarboxylase. This Pseudomonas aeruginosa (strain UCBPP-PA14) protein is Probable 2-(5''-triphosphoribosyl)-3'-dephosphocoenzyme-A synthase.